Reading from the N-terminus, the 252-residue chain is 3-dehydroquinate dehydratase (252 aa).

3-dehydroquinate-binding positions include S21, E46–R48, and R82. H143 serves as the catalytic Proton donor/acceptor. K170 acts as the Schiff-base intermediate with substrate in catalysis. Positions 213, 232, and 236 each coordinate 3-dehydroquinate.

Belongs to the type-I 3-dehydroquinase family. Homodimer.

The catalysed reaction is 3-dehydroquinate = 3-dehydroshikimate + H2O. The protein operates within metabolic intermediate biosynthesis; chorismate biosynthesis; chorismate from D-erythrose 4-phosphate and phosphoenolpyruvate: step 3/7. Involved in the third step of the chorismate pathway, which leads to the biosynthesis of aromatic amino acids. Catalyzes the cis-dehydration of 3-dehydroquinate (DHQ) and introduces the first double bond of the aromatic ring to yield 3-dehydroshikimate. The sequence is that of 3-dehydroquinate dehydratase from Shigella dysenteriae serotype 1 (strain Sd197).